The primary structure comprises 455 residues: Protein png1 (455 aa).

The segment at 1-110 is disordered; the sequence is MTDGRQQHTR…LPVFPSPPRD (110 aa). Over residues 38–53 the composition is skewed to low complexity; sequence SLQEQSRSRSRTQSPS. The segment covering 59 to 73 has biased composition (pro residues); it reads HTPPHPSRAPPPPPT. Low complexity predominate over residues 74–98; that stretch reads GAHYPSSQSPSQQHQQHQLPASSSL. The Zn(2+) site is built by Cys199, Cys202, Cys231, and Cys236. A disordered region spans residues 408–455; that stretch reads NLIPREQTSGRPGEQKTPASMQDTPVDWVAAQQMGPGQSGPDRSQDGR.

This sequence belongs to the transglutaminase-like superfamily. PNGase family.

This is Protein png1 (png1) from Aspergillus fumigatus (strain ATCC MYA-4609 / CBS 101355 / FGSC A1100 / Af293) (Neosartorya fumigata).